A 333-amino-acid polypeptide reads, in one-letter code: Nucleoid-associated protein VV1_3120 (333 aa).

It belongs to the YejK family.

The protein localises to the cytoplasm. The protein resides in the nucleoid. The protein is Nucleoid-associated protein VV1_3120 of Vibrio vulnificus (strain CMCP6).